The primary structure comprises 256 residues: Probable hydroxyacylglutathione hydrolase SPCC13B11.03c (256 aa).

Zn(2+)-binding residues include histidine 63, histidine 65, aspartate 67, histidine 68, histidine 118, and aspartate 139. Residues 148–150 (RFF), 178–180 (HEY), and 250–253 (RTLK) each bind substrate. Histidine 178 provides a ligand contact to Zn(2+).

Belongs to the metallo-beta-lactamase superfamily. Glyoxalase II family. Zn(2+) is required as a cofactor.

Its subcellular location is the cytoplasm. It localises to the nucleus. It catalyses the reaction an S-(2-hydroxyacyl)glutathione + H2O = a 2-hydroxy carboxylate + glutathione + H(+). It carries out the reaction (R)-S-lactoylglutathione + H2O = (R)-lactate + glutathione + H(+). It participates in secondary metabolite metabolism; methylglyoxal degradation; (R)-lactate from methylglyoxal: step 2/2. In terms of biological role, thiolesterase that catalyzes the hydrolysis of S-D-lactoylglutathione to form glutathione and D-lactic acid. Involved in the metabolism of methylglyoxal, a toxic compound for yeast proliferation, by converting methylglyoxal to lactate via S-D-lactoylglutathione by sequential enzyme reactions catalyzed by glyoxalase I and glyoxalase II. The chain is Probable hydroxyacylglutathione hydrolase SPCC13B11.03c from Schizosaccharomyces pombe (strain 972 / ATCC 24843) (Fission yeast).